Consider the following 130-residue polypeptide: DNA-directed RNA polymerase subunit omega (130 aa).

2 disordered regions span residues 79–98 and 108–130; these read EPES…VDAD and TEEE…EEDE.

The protein belongs to the RNA polymerase subunit omega family. In terms of assembly, the RNAP catalytic core consists of 2 alpha, 1 beta, 1 beta' and 1 omega subunit. When a sigma factor is associated with the core the holoenzyme is formed, which can initiate transcription.

The enzyme catalyses RNA(n) + a ribonucleoside 5'-triphosphate = RNA(n+1) + diphosphate. Its function is as follows. Promotes RNA polymerase assembly. Latches the N- and C-terminal regions of the beta' subunit thereby facilitating its interaction with the beta and alpha subunits. This Nitrobacter winogradskyi (strain ATCC 25391 / DSM 10237 / CIP 104748 / NCIMB 11846 / Nb-255) protein is DNA-directed RNA polymerase subunit omega.